The following is a 339-amino-acid chain: Ubiquitin carboxyl-terminal hydrolase 50 (339 aa).

The 296-residue stretch at 44 to 339 (TGLWNLGNTC…AFCKNSVTQA (296 aa)) folds into the USP domain. C53 acts as the Nucleophile in catalysis. The Proton acceptor role is filled by H327.

The protein belongs to the peptidase C19 family. In terms of tissue distribution, weakly expressed in a few tissues.

The protein resides in the cytoplasm. It is found in the cytoskeleton. Its subcellular location is the microtubule organizing center. The protein localises to the centrosome. It localises to the nucleus. It catalyses the reaction Thiol-dependent hydrolysis of ester, thioester, amide, peptide and isopeptide bonds formed by the C-terminal Gly of ubiquitin (a 76-residue protein attached to proteins as an intracellular targeting signal).. Its function is as follows. Deubiquitinating enzyme that removes conjugated ubiquitin from specific proteins to regulate different cellular processes. Regulates the inflammasome signaling pathway by deubiquitinating 'Lys-63'-linked polyubiquitination of the PYCARD/ASC adapter protein. Regulates the ubiquitination and stability of the ACE2 protein. Acts as a negative regulator of the G2/M checkpoint pathway, by preventing serine/threonine kinase WEE1 degradation, thereby repressing entry into mitosis following activation of the G2/M DNA damage checkpoint. The polypeptide is Ubiquitin carboxyl-terminal hydrolase 50 (Homo sapiens (Human)).